The chain runs to 88 residues: UPF0237 protein spr0217 (88 aa).

Positions 4 to 77 constitute an ACT domain; it reads IITVVGKDKS…QTLNVKINIQ (74 aa).

It belongs to the UPF0237 family. In terms of assembly, homodimer.

The protein is UPF0237 protein spr0217 of Streptococcus pneumoniae (strain ATCC BAA-255 / R6).